A 151-amino-acid chain; its full sequence is UPF0178 protein YaiI (151 aa).

This sequence belongs to the UPF0178 family.

The chain is UPF0178 protein YaiI from Salmonella enteritidis PT4 (strain P125109).